The chain runs to 184 residues: Elongation factor P (184 aa).

It belongs to the elongation factor P family.

Its subcellular location is the cytoplasm. The protein operates within protein biosynthesis; polypeptide chain elongation. Functionally, involved in peptide bond synthesis. Stimulates efficient translation and peptide-bond synthesis on native or reconstituted 70S ribosomes in vitro. Probably functions indirectly by altering the affinity of the ribosome for aminoacyl-tRNA, thus increasing their reactivity as acceptors for peptidyl transferase. This chain is Elongation factor P, found in Paracidovorax citrulli (strain AAC00-1) (Acidovorax citrulli).